Here is a 237-residue protein sequence, read N- to C-terminus: Phosphoribosylaminoimidazole-succinocarboxamide synthase (237 aa).

Belongs to the SAICAR synthetase family.

It carries out the reaction 5-amino-1-(5-phospho-D-ribosyl)imidazole-4-carboxylate + L-aspartate + ATP = (2S)-2-[5-amino-1-(5-phospho-beta-D-ribosyl)imidazole-4-carboxamido]succinate + ADP + phosphate + 2 H(+). Its pathway is purine metabolism; IMP biosynthesis via de novo pathway; 5-amino-1-(5-phospho-D-ribosyl)imidazole-4-carboxamide from 5-amino-1-(5-phospho-D-ribosyl)imidazole-4-carboxylate: step 1/2. The polypeptide is Phosphoribosylaminoimidazole-succinocarboxamide synthase (Pseudomonas fluorescens (strain Pf0-1)).